The sequence spans 256 residues: Trans-aconitate 2-methyltransferase (256 aa).

It belongs to the methyltransferase superfamily. Tam family.

Its subcellular location is the cytoplasm. The enzyme catalyses trans-aconitate + S-adenosyl-L-methionine = (E)-3-(methoxycarbonyl)pent-2-enedioate + S-adenosyl-L-homocysteine. Functionally, catalyzes the S-adenosylmethionine monomethyl esterification of trans-aconitate. In Rhodopseudomonas palustris (strain BisA53), this protein is Trans-aconitate 2-methyltransferase.